The following is a 628-amino-acid chain: Nucleoside-triphosphatase 1 (628 aa).

The N-terminal stretch at 1–25 (MWLPVYVPLLLVFGVSLSLPQGSLG) is a signal peptide. The active-site Proton acceptor is glutamate 236. Residue asparagine 432 is glycosylated (N-linked (GlcNAc...) asparagine).

The protein belongs to the GDA1/CD39 NTPase family. Homotetramer.

It localises to the secreted. It is found in the parasitophorous vacuole. It catalyses the reaction a ribonucleoside 5'-triphosphate + H2O = a ribonucleoside 5'-diphosphate + phosphate + H(+). In terms of biological role, may perform an important processing step in the conversion of high energy nucleotides prior to uptake by the parasite and may contribute to intracellular survival and virulence. NTPAse-I has a specific activity 4.5-fold higher than NTPAse-II in hydrolysis of ATP. The primary difference between these isozymes lies in their ability to hydrolyze nucleoside triphosphate versus diphosphate substrates. While NTPAse-II hydrolyzes ATP to ADP and ADP to AMP at almost the same rate, NTPAse-I hydrolyzes ADP to AMP at a much slower rate (0.7% of the rate for ATP). The protein is Nucleoside-triphosphatase 1 (NTP3) of Toxoplasma gondii.